Consider the following 140-residue polypeptide: VapC ribonuclease Y4jK (140 aa).

In terms of domain architecture, PINc spans 2-135; sequence IVLDTNVISE…FEAAGLDIIN (134 aa). Mg(2+) contacts are provided by aspartate 5 and aspartate 104.

The protein belongs to the PINc/VapC protein family. Requires Mg(2+) as cofactor.

Functionally, toxic component of a type II toxin-antitoxin (TA) system. An RNase. Involved in plasmid stability. In Sinorhizobium fredii (strain NBRC 101917 / NGR234), this protein is VapC ribonuclease Y4jK.